The sequence spans 520 residues: Cytochrome P450 monooxygenase TRI4 (520 aa).

A helical transmembrane segment spans residues Leu10 to Phe30. An N-linked (GlcNAc...) asparagine glycan is attached at Asn447. Cys455 is a binding site for heme.

The protein belongs to the cytochrome P450 family. Heme is required as a cofactor.

The protein localises to the membrane. It functions in the pathway sesquiterpene biosynthesis; trichothecene biosynthesis. Functionally, cytochrome P450 monooxygenase; part of the core gene cluster that mediates the biosynthesis of trichothecenes, a very large family of chemically related bicyclic sesquiterpene compounds acting as mycotoxins, including T2-toxin. The biosynthesis of trichothecenes begins with the cyclization of farnesyl diphosphate to trichodiene and is catalyzed by the trichodiene synthase TRI5. Trichodiene undergoes a series of oxygenations catalyzed by the cytochrome P450 monooxygenase TRI4. TRI4 controls the addition of four oxygens at C-2, C-3, C-11, and the C-12, C-13-epoxide to form the intermediate isotrichotriol. Isotrichotriol then undergoes a non-enzymatic isomerization and cyclization to form isotrichodermol. During this process, the oxygen at the C-2 position becomes the pyran ring oxygen and the hydroxyl group at C-11 is lost. More complex type A trichothecenes are built by modifying isotrichodermol through a series of paired hydroxylation and acetylation or acylation steps. Isotrichodermol is converted to isotrichodermin by the acetyltransferase TRI101. TRI101 encodes a C-3 transacetylase that acts as a self-protection or resistance factor during biosynthesis and that the presence of a free C-3 hydroxyl group is a key component of Fusarium trichothecene phytotoxicity. A second hydroxyl group is added to C-15 by the trichothecene C-15 hydroxylase TRI11, producing 15-decalonectrin, which is then acetylated by TRI3, producing calonectrin. A third hydroxyl group is added at C-4 by the cytochrome P450 monooxygenase TRI13, converting calonectrin to 3,15-diacetoxyspirpenol, which is subsequently acetylated by the acetyltransferase TRI7. A fourth hydroxyl group is added to C-8 by the cytochrome P450 monooxygenase TRI1, followed by the addition of an isovaleryl moiety by TRI16. Finally, the acetyl group is removed from the C-3 position by the trichothecene C-3 esterase TRI8 to produce T-2 toxin. In Fusarium sporotrichioides, this protein is Cytochrome P450 monooxygenase TRI4.